The primary structure comprises 501 residues: NAD(P)H-quinone oxidoreductase chain 4, chloroplastic (501 aa).

14 helical membrane-spanning segments follow: residues 5–25, 38–58, 85–105, 112–130, 135–155, 168–188, 209–229, 243–263, 275–295, 306–326, 331–351, 387–407, 417–437, and 463–483; these read FPWLTIIVLLPIFAGSLIFFL, ICICSLELLLTTYTFCYHFQL, GLSIGPILLTGFITTLATLAA, SRLFHFLMLAMYSGQIGSF, LLLFFIMWELELIPVYLLLAM, FILYTAGGSIFLLIGVLGIGL, ALEIILYIGFLIAFSVKLPII, HYSTCMLLAGILLKMGAYGLV, SIFSPWLIIVGAIQIIYAALT, IAYSSVSHMGFIIIGIGSITD, GAILQIISHGFIGAALFFLAG, LALPGMSGFLAELIVFFGIIT, ILITFVMAIGMILTPIYLLSM, and LFVSISILLPIIAIGIYPDFV.

This sequence belongs to the complex I subunit 4 family.

Its subcellular location is the plastid. The protein resides in the chloroplast thylakoid membrane. It catalyses the reaction a plastoquinone + NADH + (n+1) H(+)(in) = a plastoquinol + NAD(+) + n H(+)(out). It carries out the reaction a plastoquinone + NADPH + (n+1) H(+)(in) = a plastoquinol + NADP(+) + n H(+)(out). The protein is NAD(P)H-quinone oxidoreductase chain 4, chloroplastic of Eucalyptus globulus subsp. globulus (Tasmanian blue gum).